The primary structure comprises 582 residues: uncharacterized protein (582 aa).

Transmembrane regions (helical) follow at residues 29-49 (LFIVLLRFIIPSILVSFFAAL), 117-137 (ISAPITVIINALTLLITMGLA), 155-175 (VWATGFITNVIVSIATSMIIV), 225-245 (YVYILAGLFTIQTFNQMYFLL), 254-274 (FISIIPPLANLINILFDYLLI), 287-307 (ATVIGWSLSCLAYVIYNIVLI), 329-349 (YLYLIILIGLASFFRNAALSV), 376-396 (SIFGSVTPISNLMLQSVWGLI), 432-452 (IVYLLFGFGLNNIFLINLFNI), 458-478 (LVVSNLVLRITLVQSIFIALS), 491-511 (IGMAWIASLMQGLFTFAPVFF), and 523-543 (IYLYIWIQPINAILTCIGNWI).

It localises to the cell membrane. This is an uncharacterized protein from Mycoplasmoides gallisepticum (strain R(low / passage 15 / clone 2)) (Mycoplasma gallisepticum).